The chain runs to 333 residues: Cytosolic sulfotransferase 10 (333 aa).

Residue Lys76–Trp81 coordinates 3'-phosphoadenylyl sulfate. His146 functions as the Proton acceptor in the catalytic mechanism. 3'-phosphoadenylyl sulfate contacts are provided by residues Arg168, Ser176, Tyr234, and Arg299–Gly301.

This sequence belongs to the sulfotransferase 1 family. As to expression, expressed in roots.

It is found in the cytoplasm. Sulfotransferase that utilizes 3'-phospho-5'-adenylyl sulfate (PAPS) as sulfonate donor to specifically catalyze the sulfate conjugation of brassinosteroids, including castasterone (CS), brassinolide (BL), related 24-epimers, and the naturally occurring (22R, 23R)-28-homobrassinosteroids. No activity on phenolic acids, desulfo-glucosinolates, flavonoids, steroids, gibberellic acids, cytokinins, phenylpropanoids, hydroxyjasmonates and coumarins. The polypeptide is Cytosolic sulfotransferase 10 (SOT10) (Arabidopsis thaliana (Mouse-ear cress)).